A 217-amino-acid chain; its full sequence is Probable transaldolase (217 aa).

The active-site Schiff-base intermediate with substrate is the Lys83.

Belongs to the transaldolase family. Type 3B subfamily.

The protein resides in the cytoplasm. The enzyme catalyses D-sedoheptulose 7-phosphate + D-glyceraldehyde 3-phosphate = D-erythrose 4-phosphate + beta-D-fructose 6-phosphate. The protein operates within carbohydrate degradation; pentose phosphate pathway; D-glyceraldehyde 3-phosphate and beta-D-fructose 6-phosphate from D-ribose 5-phosphate and D-xylulose 5-phosphate (non-oxidative stage): step 2/3. In terms of biological role, transaldolase is important for the balance of metabolites in the pentose-phosphate pathway. In Caulobacter sp. (strain K31), this protein is Probable transaldolase.